The chain runs to 165 residues: Nutritionally-regulated adipose and cardiac-enriched protein (165 aa).

The interval Met-1–Ile-47 is disordered. The span at Arg-34 to Cys-43 shows a compositional bias: basic and acidic residues. The chain crosses the membrane as a helical span at residues Gly-112 to Cys-132.

As to expression, predominantly expressed in white adipose tissue (at protein level) and brown adipose tissue. Also detected in heart.

It is found in the cell membrane. This Mus musculus (Mouse) protein is Nutritionally-regulated adipose and cardiac-enriched protein (Nrac).